The following is a 140-amino-acid chain: Low calcium response locus protein T (140 aa).

This Yersinia pseudotuberculosis serotype I (strain IP32953) protein is Low calcium response locus protein T (lcrT).